The chain runs to 329 residues: 4-hydroxythreonine-4-phosphate dehydrogenase (329 aa).

The substrate site is built by His136 and Thr137. A divalent metal cation contacts are provided by His166, His211, and His266. Residues Lys274, Asn283, and Arg292 each coordinate substrate.

The protein belongs to the PdxA family. In terms of assembly, homodimer. Zn(2+) is required as a cofactor. The cofactor is Mg(2+). Requires Co(2+) as cofactor.

The protein resides in the cytoplasm. The enzyme catalyses 4-(phosphooxy)-L-threonine + NAD(+) = 3-amino-2-oxopropyl phosphate + CO2 + NADH. Its pathway is cofactor biosynthesis; pyridoxine 5'-phosphate biosynthesis; pyridoxine 5'-phosphate from D-erythrose 4-phosphate: step 4/5. Its function is as follows. Catalyzes the NAD(P)-dependent oxidation of 4-(phosphooxy)-L-threonine (HTP) into 2-amino-3-oxo-4-(phosphooxy)butyric acid which spontaneously decarboxylates to form 3-amino-2-oxopropyl phosphate (AHAP). The protein is 4-hydroxythreonine-4-phosphate dehydrogenase of Salmonella typhimurium (strain LT2 / SGSC1412 / ATCC 700720).